The chain runs to 319 residues: MLIKPQSTSSFPLNWDAIFPEKNPLAVEIGFGNGKFLKTLETTGTNVVGFEVSLLSVEKAMKVIDHTKTALLLMDGIWGLRELFSERSVDALYINFPLPWPHKKHASRRLFTLPKLQIYASRLVDNAILQLQTDVKEYAEEAIRNSEESGLFSLADYAVRNEVQVGTKYEQKWVSQGKKIYKVVLRKKRHVSVPNYLDKEVIMPHAIVHDSHGTLKAGTYRTTFGTIKLWEPFSNNQAMLLIPAIVSDDDFIGVSLQQRVYISVSPHREGFIVKLDNHADVFKTENVKSLIWLIANQISNGNIKRINVQPPSKLEYEPA.

E28, E51, and D75 together coordinate S-adenosyl-L-methionine. Substrate-binding positions include D134 and 167–170; that span reads TKYE.

This sequence belongs to the class I-like SAM-binding methyltransferase superfamily. TrmB family.

The enzyme catalyses guanosine(46) in tRNA + S-adenosyl-L-methionine = N(7)-methylguanosine(46) in tRNA + S-adenosyl-L-homocysteine. Its pathway is tRNA modification; N(7)-methylguanine-tRNA biosynthesis. Functionally, catalyzes the formation of N(7)-methylguanine at position 46 (m7G46) in tRNA. In Coprothermobacter proteolyticus (strain ATCC 35245 / DSM 5265 / OCM 4 / BT), this protein is tRNA (guanine-N(7)-)-methyltransferase.